Consider the following 39-residue polypeptide: uncharacterized protein (39 aa).

Residues Met1–Ser21 form the signal peptide.

This is an uncharacterized protein from Saccharomyces cerevisiae (strain ATCC 204508 / S288c) (Baker's yeast).